We begin with the raw amino-acid sequence, 296 residues long: Light-independent protochlorophyllide reductase iron-sulfur ATP-binding protein (296 aa).

Residues 1 to 20 form a disordered region; the sequence is MTTTLSRPTDGEGSVQVQQD. Residues 39–44 and Lys68 contribute to the ATP site; that span reads GIGKST. Position 43 (Ser43) interacts with Mg(2+). Residues Cys124 and Cys158 each coordinate [4Fe-4S] cluster. An ATP-binding site is contributed by 209–210; it reads NR.

This sequence belongs to the NifH/BchL/ChlL family. As to quaternary structure, homodimer. Protochlorophyllide reductase is composed of three subunits; ChlL, ChlN and ChlB. Requires [4Fe-4S] cluster as cofactor.

It catalyses the reaction chlorophyllide a + oxidized 2[4Fe-4S]-[ferredoxin] + 2 ADP + 2 phosphate = protochlorophyllide a + reduced 2[4Fe-4S]-[ferredoxin] + 2 ATP + 2 H2O. Its pathway is porphyrin-containing compound metabolism; chlorophyll biosynthesis (light-independent). In terms of biological role, component of the dark-operative protochlorophyllide reductase (DPOR) that uses Mg-ATP and reduced ferredoxin to reduce ring D of protochlorophyllide (Pchlide) to form chlorophyllide a (Chlide). This reaction is light-independent. The L component serves as a unique electron donor to the NB-component of the complex, and binds Mg-ATP. In Synechococcus sp. (strain CC9902), this protein is Light-independent protochlorophyllide reductase iron-sulfur ATP-binding protein.